Reading from the N-terminus, the 297-residue chain is uncharacterized protein (297 aa).

The next 4 helical transmembrane spans lie at 3–23 (DYIYPIIAGVIAGIATRLYML), 38–58 (VIHIALGLIAAGLGAIIMPAL), 103–123 (IEGIAIAFESRNYIVIFTALL), and 128–148 (YVFLSIWAAVIAAVVCFLLAM).

Its subcellular location is the cell membrane. This is an uncharacterized protein from Bacillus subtilis (strain 168).